We begin with the raw amino-acid sequence, 161 residues long: Protein ZMO0507 (161 aa).

It belongs to the free Met sulfoxide reductase family.

The chain is Protein ZMO0507 from Zymomonas mobilis subsp. mobilis (strain ATCC 31821 / ZM4 / CP4).